The chain runs to 527 residues: Amine oxidase [flavin-containing] A (527 aa).

At Met-1 the chain carries N-acetylmethionine. Residues 1-497 (MASREKTSIE…HTFWERNLPS (497 aa)) lie on the Cytoplasmic side of the membrane. Ser-383 carries the phosphoserine modification. S-8alpha-FAD cysteine is present on Cys-406. A helical; Anchor for type IV membrane protein transmembrane segment spans residues 498 to 518 (VTGLLKLIGFTTSVTALWIVA). Topologically, residues 519–527 (YKFRLLRRS) are mitochondrial intermembrane. The tract at residues 520 to 522 (KFR) is interaction with membrane phospholipid headgroups.

The protein belongs to the flavin monoamine oxidase family. In terms of assembly, monomer, homo- or heterodimer (containing two subunits of similar size). Each subunit contains a covalently bound flavin. Enzymatically active as monomer. FAD is required as a cofactor.

The protein localises to the mitochondrion outer membrane. The catalysed reaction is a secondary aliphatic amine + O2 + H2O = a primary amine + an aldehyde + H2O2. It catalyses the reaction a primary methyl amine + O2 + H2O = an aldehyde + H2O2 + NH4(+). It carries out the reaction (R)-adrenaline + O2 + H2O = (R)-3,4-dihydroxymandelaldehyde + methylamine + H2O2. The enzyme catalyses dopamine + O2 + H2O = 3,4-dihydroxyphenylacetaldehyde + H2O2 + NH4(+). The catalysed reaction is tyramine + O2 + H2O = (4-hydroxyphenyl)acetaldehyde + H2O2 + NH4(+). It catalyses the reaction (R)-noradrenaline + O2 + H2O = (R)-3,4-dihydroxymandelaldehyde + H2O2 + NH4(+). It carries out the reaction serotonin + O2 + H2O = (5-hydroxyindol-3-yl)acetaldehyde + H2O2 + NH4(+). The enzyme catalyses kynuramine + O2 + H2O = 3-(2-aminophenyl)-3-oxopropanal + H2O2 + NH4(+). The catalysed reaction is tryptamine + O2 + H2O = indole-3-acetaldehyde + H2O2 + NH4(+). It catalyses the reaction 2-phenylethylamine + O2 + H2O = 2-phenylacetaldehyde + H2O2 + NH4(+). Catalyzes the oxidative deamination of primary and some secondary amine such as neurotransmitters, with concomitant reduction of oxygen to hydrogen peroxide and has important functions in the metabolism of neuroactive and vasoactive amines in the central nervous system and peripheral tissues. Preferentially oxidizes serotonin. Also catalyzes the oxidative deamination of kynuramine to 3-(2-aminophenyl)-3-oxopropanal that can spontaneously condense to 4-hydroxyquinoline. The polypeptide is Amine oxidase [flavin-containing] A (Canis lupus familiaris (Dog)).